A 236-amino-acid polypeptide reads, in one-letter code: Endonuclease V (236 aa).

2 residues coordinate Mg(2+): aspartate 47 and aspartate 115.

Belongs to the endonuclease V family. Mg(2+) is required as a cofactor.

The protein localises to the cytoplasm. It carries out the reaction Endonucleolytic cleavage at apurinic or apyrimidinic sites to products with a 5'-phosphate.. In terms of biological role, DNA repair enzyme involved in the repair of deaminated bases. Selectively cleaves double-stranded DNA at the second phosphodiester bond 3' to a deoxyinosine leaving behind the intact lesion on the nicked DNA. This chain is Endonuclease V, found in Xanthomonas campestris pv. campestris (strain 8004).